We begin with the raw amino-acid sequence, 473 residues long: UDP-N-acetylmuramate--L-alanine ligase (473 aa).

123-129 provides a ligand contact to ATP; that stretch reads GTHGKTT.

It belongs to the MurCDEF family.

The protein resides in the cytoplasm. It catalyses the reaction UDP-N-acetyl-alpha-D-muramate + L-alanine + ATP = UDP-N-acetyl-alpha-D-muramoyl-L-alanine + ADP + phosphate + H(+). Its pathway is cell wall biogenesis; peptidoglycan biosynthesis. In terms of biological role, cell wall formation. The protein is UDP-N-acetylmuramate--L-alanine ligase of Marinomonas sp. (strain MWYL1).